Consider the following 609-residue polypeptide: MEEELKQQFDEMGVEPADAVLGRCAELAITYNIHDATEFVEQWMAFSLSHLQGEDPAIENLGDFERKVLQLRKDKAGYKATGQKAKSYGSPSVQDTSSLATYGVMEDDPMLDDYVSESAVDSSALHTPKAKKQSDRTANLKGAALFSPASYTPQSAKRKAGLETPSNSVAGKPGDIVDTFGHPKLLAGSSWQSQMEHTVPVTQKLLHNDAPLTIANLGYMNDLLTDRCHNLRVRFNQTGPALVDKKLGQAGAAECIWYPQDRQVLQSAGGLHAVGMIHSEDDGPLDAHSAFMAVLDDDVEDEMDPTLTLNFSRVKSASIFPGQVVLAKGFIPRGKTFMVEEIHTERKLTPATPLQIDRELQFVVASGPFTDSTDLFYEPLHDLLKYLKDHRPDVLVLTGPFLDADHKMVGELAETFDTFFEKMIGGIMESIGSHTAVLVVTSQKDAMALSVYPTPPPALRRTYPNLYMLPDPSLVDLDGFTLGVTSTDVVDHLLSHEFAVNAGERMHRAINHLFHQGSFYPLYPPADEDMAYDSQLALKYAQLKQLPNVLILPSDQRHFIRLVNDCLVINPGRVADKKGGTFARFLVAPSVPGKAANMFNSVACQVQRI.

A Phosphoserine modification is found at Ser-155. Thr-164 is modified (phosphothreonine). Phosphoserine occurs at positions 166 and 168.

The protein belongs to the DNA polymerase alpha subunit B family. As to quaternary structure, component of the alpha DNA polymerase complex (also known as the alpha DNA polymerase-primase complex) consisting of four subunits: the catalytic subunit PolA1, the regulatory subunit PolA2, and the primase complex subunits Prim1 and Prim2 respectively. PolA1 associates with the DNA primase complex before association with PolA2. In terms of processing, phosphorylated in embryos until cycle 13. In terms of tissue distribution, expressed in embryos (at protein level).

It localises to the nucleus. Functionally, accessory subunit of the DNA polymerase alpha complex (also known as the alpha DNA polymerase-primase complex) which plays an essential role in the initiation of DNA synthesis. During the S phase of the cell cycle, the DNA polymerase alpha complex (composed of a catalytic subunit PolA1, an accessory subunit PolA2 and two primase subunits, the catalytic subunit Prim1 and the regulatory subunit Prim2) is recruited to DNA at the replicative forks. The primase subunit of the polymerase alpha complex initiates DNA synthesis by oligomerising short RNA primers on both leading and lagging strands. These primers are initially extended by the polymerase alpha catalytic subunit and subsequently transferred to polymerase delta and polymerase epsilon for processive synthesis on the lagging and leading strand, respectively. This Drosophila melanogaster (Fruit fly) protein is DNA polymerase alpha subunit B.